Reading from the N-terminus, the 423-residue chain is uncharacterized protein (423 aa).

A BON domain is found at 75–145 (LHVVVTQPIA…PIVNNIKVAG (71 aa)).

This sequence belongs to the bacterial secretin family.

In terms of biological role, involved in the secretion of an unknown compound. This is an uncharacterized protein from Sinorhizobium fredii (strain NBRC 101917 / NGR234).